Here is a 226-residue protein sequence, read N- to C-terminus: UPF0758 protein Sca_1264 (226 aa).

An MPN domain is found at 102-224 (KITSPQDAAD…YLSMVEGGYF (123 aa)). Zn(2+) contacts are provided by His-173, His-175, and Asp-186. Positions 173-186 (HNHPSGDVTPSKED) match the JAMM motif motif.

The protein belongs to the UPF0758 family.

The protein is UPF0758 protein Sca_1264 of Staphylococcus carnosus (strain TM300).